A 126-amino-acid chain; its full sequence is Protein ApaG (126 aa).

The 125-residue stretch at 2 to 126 (KQLESSIRIE…FRLAAPGLLH (125 aa)) folds into the ApaG domain.

The polypeptide is Protein ApaG (Shewanella loihica (strain ATCC BAA-1088 / PV-4)).